The sequence spans 933 residues: Phosphoenolpyruvate carboxylase (933 aa).

Catalysis depends on residues histidine 158 and lysine 592.

It belongs to the PEPCase type 1 family. Mg(2+) is required as a cofactor.

The enzyme catalyses oxaloacetate + phosphate = phosphoenolpyruvate + hydrogencarbonate. In terms of biological role, forms oxaloacetate, a four-carbon dicarboxylic acid source for the tricarboxylic acid cycle. The protein is Phosphoenolpyruvate carboxylase of Nitrosomonas europaea (strain ATCC 19718 / CIP 103999 / KCTC 2705 / NBRC 14298).